A 499-amino-acid polypeptide reads, in one-letter code: Thioredoxin reductase 1, cytoplasmic (499 aa).

FAD-binding positions include 22–23 (SG), 42–43 (DF), 58–59 (TC), and 63–67 (SCIPK). The cysteines at positions 59 and 64 are disulfide-linked. Lys-68 is modified (N6-succinyllysine). Tyr-131 carries the phosphotyrosine modification. Residues 131-132 (YG) and Thr-161 contribute to the FAD site. Residues Arg-166, 198–204 (ASYVALE), 221–222 (RS), Arg-226, 226–228 (RGF), 292–293 (GR), and Lys-315 each bind NADP(+). Position 200 (Tyr-200) interacts with FAD. Residues Asp-334, 341 to 343 (ELT), and His-472 contribute to the FAD site. Glu-341 serves as a coordination point for NADP(+). The Proton acceptor role is filled by His-472. The cysteinyl-selenocysteine (Cys-Sec) cross-link spans 497–498 (CU). Residue Sec-498 is a non-standard amino acid, selenocysteine.

This sequence belongs to the class-I pyridine nucleotide-disulfide oxidoreductase family. As to quaternary structure, homodimer. FAD is required as a cofactor. ISGylated.

Its subcellular location is the cytoplasm. It catalyses the reaction [thioredoxin]-dithiol + NADP(+) = [thioredoxin]-disulfide + NADPH + H(+). It carries out the reaction H2O2 + NADPH + H(+) = NADP(+) + 2 H2O. Its function is as follows. Reduces disulfideprotein thioredoxin (Trx) to its dithiol-containing form. Homodimeric flavoprotein involved in the regulation of cellular redox reactions, growth and differentiation. Contains a selenocysteine residue at the C-terminal active site that is essential for catalysis. Also has reductase activity on hydrogen peroxide (H2O2). The polypeptide is Thioredoxin reductase 1, cytoplasmic (TXNRD1) (Sus scrofa (Pig)).